Consider the following 310-residue polypeptide: 4-hydroxyproline 2-epimerase (310 aa).

The Proton acceptor role is filled by Cys-88. Substrate-binding positions include 89 to 90 (GH), His-208, and Asp-232. Residue Cys-236 is the Proton donor of the active site. Position 237-238 (237-238 (GT)) interacts with substrate.

The protein belongs to the proline racemase family.

It carries out the reaction trans-4-hydroxy-L-proline = cis-4-hydroxy-D-proline. Catalyzes the epimerization of trans-4-hydroxy-L-proline (t4LHyp) to cis-4-hydroxy-D-proline (c4DHyp). Is likely involved in a degradation pathway that converts t4LHyp to alpha-ketoglutarate. Displays no proline racemase activity. This chain is 4-hydroxyproline 2-epimerase, found in Burkholderia cenocepacia (strain ATCC BAA-245 / DSM 16553 / LMG 16656 / NCTC 13227 / J2315 / CF5610) (Burkholderia cepacia (strain J2315)).